A 431-amino-acid chain; its full sequence is Argininosuccinate lyase (431 aa).

This sequence belongs to the lyase 1 family. Argininosuccinate lyase subfamily.

It localises to the cytoplasm. It catalyses the reaction 2-(N(omega)-L-arginino)succinate = fumarate + L-arginine. Its pathway is amino-acid biosynthesis; L-arginine biosynthesis; L-arginine from L-ornithine and carbamoyl phosphate: step 3/3. This Stenotrophomonas maltophilia (strain K279a) protein is Argininosuccinate lyase.